The primary structure comprises 342 residues: viral G-protein coupled receptor (342 aa).

The Extracellular segment spans residues Met-1–Val-51. N-linked (GlcNAc...) asparagine; by host glycans are attached at residues Asn-18, Asn-22, and Asn-31. The chain crosses the membrane as a helical span at residues Gly-52–Phe-72. Residues Cys-73–Asn-92 are Cytoplasmic-facing. A helical transmembrane segment spans residues Ser-93–Ile-113. Topologically, residues Ser-114–Glu-121 are extracellular. A helical membrane pass occupies residues Ile-122–Val-142. At Arg-143–Ser-159 the chain is on the cytoplasmic side. A helical transmembrane segment spans residues Leu-160–Cys-180. The Extracellular segment spans residues Arg-181–Thr-217. The chain crosses the membrane as a helical span at residues Ala-218–Val-238. At Arg-239 to Gly-251 the chain is on the cytoplasmic side. A helical membrane pass occupies residues Val-252 to Leu-272. The Extracellular portion of the chain corresponds to Leu-273 to Asn-293. Residues Val-294–Tyr-314 traverse the membrane as a helical segment. Over Ser-315–Thr-342 the chain is Cytoplasmic.

The protein belongs to the G-protein coupled receptor 1 family. Interacts with protein K7; this interaction promotes vGPCR proteasomal degradation. Interacts with host CADM1; this interaction is essential for chronic NF-kappa-B activation.

It localises to the host cell membrane. Functionally, receptor that signals constitutively via several signaling pathways including PI3K/AKT as well as mitogen- and stress-activated/MAP kinases. Promotes host cell proliferation and survival, modulates cell migration, stimulates angiogenesis, and recruits inflammatory cells, both in expressing cells and in neighboring cells. Maintains chronic activation of NF-kappa-B via interaction with host CADM1. This Human herpesvirus 8 type P (isolate GK18) (HHV-8) protein is viral G-protein coupled receptor (ORF74).